The primary structure comprises 397 residues: Putative efflux system protein YvrP (397 aa).

The chain crosses the membrane as a helical span at residues 8 to 28 (LIGGAICAGVLVLAGIGAGGF). The stretch at 106–183 (EDHSDEVEQA…KELAGLTKNK (78 aa)) forms a coiled coil.

The protein belongs to the membrane fusion protein (MFP) (TC 8.A.1) family.

It is found in the cell membrane. In Bacillus subtilis (strain 168), this protein is Putative efflux system protein YvrP (yvrP).